The chain runs to 687 residues: Glycine--tRNA ligase beta subunit (687 aa).

Belongs to the class-II aminoacyl-tRNA synthetase family. As to quaternary structure, tetramer of two alpha and two beta subunits.

Its subcellular location is the cytoplasm. It catalyses the reaction tRNA(Gly) + glycine + ATP = glycyl-tRNA(Gly) + AMP + diphosphate. In Ruegeria sp. (strain TM1040) (Silicibacter sp.), this protein is Glycine--tRNA ligase beta subunit.